We begin with the raw amino-acid sequence, 583 residues long: PTS system lactose-specific EIICB component (583 aa).

The region spanning 8–409 is the PTS EIIC type-3 domain; sequence IEKGKPFFEK…VVDVMIYYPF (402 aa). The next 9 membrane-spanning stretches (helical) occupy residues 30–50, 64–84, 103–123, 137–157, 176–196, 222–242, 283–303, 339–359, and 381–401; these read GFIA…ITYV, GILM…VAGT, INFI…AADP, KGLL…NFFI, VFKD…LDLL, GWIG…VGIH, FVAT…FMWL, VFFI…KFFV, and IVMG…LIVV. Residues 453–462 show a composition bias toward low complexity; it reads ANETTTTESA. Residues 453–475 form a disordered region; it reads ANETTTTESAPSDEEVSAKNSSN. In terms of domain architecture, PTS EIIB type-3 spans 480 to 583; it reads QTNVLVLCAG…LDFVQQQFEK (104 aa). Cys-487 functions as the Phosphocysteine intermediate; for EIIB activity in the catalytic mechanism. Cys-487 is modified (phosphocysteine; by EIIA).

It localises to the cell membrane. The catalysed reaction is lactose(out) + N(pros)-phospho-L-histidyl-[protein] = lactose 6-phosphate(in) + L-histidyl-[protein]. Its function is as follows. The phosphoenolpyruvate-dependent sugar phosphotransferase system (sugar PTS), a major carbohydrate active transport system, catalyzes the phosphorylation of incoming sugar substrates concomitantly with their translocation across the cell membrane. The enzyme II LacEF PTS system is involved in lactose transport. This Staphylococcus haemolyticus (strain JCSC1435) protein is PTS system lactose-specific EIICB component.